A 154-amino-acid chain; its full sequence is Lipoprotein signal peptidase (154 aa).

A run of 4 helical transmembrane segments spans residues 8–28 (AFFL…YWAL), 36–56 (IVVN…AFSF), 66–86 (WLFA…LLTK), and 88–108 (HHWL…GNLY). Residues Asp118 and Asp136 contribute to the active site. Residues 129-149 (WPVFNLADVAITLGVILMLIA) traverse the membrane as a helical segment.

This sequence belongs to the peptidase A8 family.

The protein localises to the cell inner membrane. It catalyses the reaction Release of signal peptides from bacterial membrane prolipoproteins. Hydrolyzes -Xaa-Yaa-Zaa-|-(S,diacylglyceryl)Cys-, in which Xaa is hydrophobic (preferably Leu), and Yaa (Ala or Ser) and Zaa (Gly or Ala) have small, neutral side chains.. It functions in the pathway protein modification; lipoprotein biosynthesis (signal peptide cleavage). Functionally, this protein specifically catalyzes the removal of signal peptides from prolipoproteins. In Dichelobacter nodosus (strain VCS1703A), this protein is Lipoprotein signal peptidase.